We begin with the raw amino-acid sequence, 248 residues long: Triosephosphate isomerase A (248 aa).

Positions 11 and 13 each coordinate substrate. H95 functions as the Electrophile in the catalytic mechanism. Catalysis depends on E165, which acts as the Proton acceptor.

This sequence belongs to the triosephosphate isomerase family. In terms of assembly, homodimer.

The protein localises to the cytoplasm. It carries out the reaction dihydroxyacetone phosphate = methylglyoxal + phosphate. The enzyme catalyses D-glyceraldehyde 3-phosphate = dihydroxyacetone phosphate. It functions in the pathway carbohydrate degradation; glycolysis; D-glyceraldehyde 3-phosphate from glycerone phosphate: step 1/1. Its pathway is carbohydrate biosynthesis; gluconeogenesis. Functionally, triosephosphate isomerase is an extremely efficient metabolic enzyme that catalyzes the interconversion between dihydroxyacetone phosphate (DHAP) and D-glyceraldehyde-3-phosphate (G3P) in glycolysis and gluconeogenesis. Its function is as follows. It is also responsible for the non-negligible production of methylglyoxal a reactive cytotoxic side-product that modifies and can alter proteins, DNA and lipids. The protein is Triosephosphate isomerase A (tpi1a) of Danio rerio (Zebrafish).